We begin with the raw amino-acid sequence, 333 residues long: Glycerol-3-phosphate dehydrogenase [NAD(P)+] (333 aa).

Residues Trp11, Arg34, and Lys107 each coordinate NADPH. Residues Lys107, Gly136, and Ser138 each contribute to the sn-glycerol 3-phosphate site. Ala140 provides a ligand contact to NADPH. Lys191, Asp244, Ser254, Arg255, and Asn256 together coordinate sn-glycerol 3-phosphate. The active-site Proton acceptor is the Lys191. Arg255 provides a ligand contact to NADPH. Positions 279 and 281 each coordinate NADPH.

Belongs to the NAD-dependent glycerol-3-phosphate dehydrogenase family.

The protein resides in the cytoplasm. It catalyses the reaction sn-glycerol 3-phosphate + NAD(+) = dihydroxyacetone phosphate + NADH + H(+). The enzyme catalyses sn-glycerol 3-phosphate + NADP(+) = dihydroxyacetone phosphate + NADPH + H(+). The protein operates within membrane lipid metabolism; glycerophospholipid metabolism. Its function is as follows. Catalyzes the reduction of the glycolytic intermediate dihydroxyacetone phosphate (DHAP) to sn-glycerol 3-phosphate (G3P), the key precursor for phospholipid synthesis. This chain is Glycerol-3-phosphate dehydrogenase [NAD(P)+], found in Nitrosospira multiformis (strain ATCC 25196 / NCIMB 11849 / C 71).